We begin with the raw amino-acid sequence, 459 residues long: MTAEETKAAESGAQSAPLRLEGVDISPKQDEGVLKVIKREGTGTETPMIGDRVFVHYTGWLLDGTKFDSSLDRKDRFSFDLGKGEVIKAWDIAVATMKVGEVCHITCKPEYAYGLAGSPPKIPPNATLVFEVELFEFKGEDLTEEEDGGIIRRIRTRGEGYAKPNEGALVEVALEGYFKDQVFDRRELRFEVGEGESMDLPCGLEKAIQRMEKGEHSIVYLKPRYAFGSAGKEKFQIPPNAELKYEIHLKSFEKAKESWEMSSEEKLEQSTIVKERGTVYFKEGKYKQAVLQYKKIVSWLEYESSFSDEDAEKAQALRLASHLNLAMCHLKLQAFSAAIENCNKALELDSNNEKGLFRRGEAHLAVNDFDLARADFQKVLQLYPSNKAAKAQLVVCQQRIRKQLEKEKKLYANMFERLAEEETKAKATVAAGDQPADAEMRDEPKNDVAGGQPQVEAEA.

An N-acetylmethionine; in peptidyl-prolyl cis-trans isomerase FKBP4; alternate modification is found at M1. The segment at 1–22 (MTAEETKAAESGAQSAPLRLEG) is disordered. T2 carries the N-acetylthreonine; in peptidyl-prolyl cis-trans isomerase FKBP4, N-terminally processed; partial modification. Positions 50 to 138 (GDRVFVHYTG…VFEVELFEFK (89 aa)) constitute a PPIase FKBP-type 1 domain. T143 bears the Phosphothreonine mark. One can recognise a PPIase FKBP-type 2 domain in the interval 167 to 253 (GALVEVALEG…KYEIHLKSFE (87 aa)). At Y220 the chain carries Phosphotyrosine. Residues 267–400 (LEQSTIVKER…AQLVVCQQRI (134 aa)) are interaction with tubulin. TPR repeat units follow at residues 270-303 (STIV…LEYE), 319-352 (LASH…DSNN), and 354-386 (KGLF…YPSN). Position 282 is an N6-acetyllysine (K282). At R373 the chain carries Omega-N-methylarginine. The interval 423–459 (TKAKATVAAGDQPADAEMRDEPKNDVAGGQPQVEAEA) is disordered.

As to quaternary structure, homodimer. Interacts with GLMN. Associates with HSP90AA1 and HSP70 in steroid hormone receptor complexes. Also interacts with peroxisomal phytanoyl-CoA alpha-hydroxylase (PHYH). Interacts with NR3C1 and dynein. Interacts with HSF1 in the HSP90 complex. Associates with tubulin. Interacts with MAPT/TAU. Interacts (via TPR domain) with S100A1, S100A2 and S100A6; the interaction is Ca(2+) dependent. Interaction with S100A1 and S100A2 (but not with S100A6) leads to inhibition of FKBP4-HSP90 interaction. Interacts with dynein; causes partially NR3C1 transport to the nucleus.

Its subcellular location is the cytoplasm. It localises to the cytosol. The protein localises to the mitochondrion. It is found in the nucleus. The protein resides in the cytoskeleton. The enzyme catalyses [protein]-peptidylproline (omega=180) = [protein]-peptidylproline (omega=0). With respect to regulation, inhibited by FK506. Immunophilin protein with PPIase and co-chaperone activities. Component of unligated steroid receptors heterocomplexes through interaction with heat-shock protein 90 (HSP90). May play a role in the intracellular trafficking of heterooligomeric forms of steroid hormone receptors between cytoplasm and nuclear compartments. The isomerase activity controls neuronal growth cones via regulation of TRPC1 channel opening. Also acts as a regulator of microtubule dynamics by inhibiting MAPT/TAU ability to promote microtubule assembly. May have a protective role against oxidative stress in mitochondria. This Bos taurus (Bovine) protein is Peptidyl-prolyl cis-trans isomerase FKBP4 (FKBP4).